A 260-amino-acid chain; its full sequence is PHD finger protein ALFIN-LIKE 5 (260 aa).

The residue at position 1 (Met1) is an N-acetylmethionine. Residues 142–203 form a disordered region; that stretch reads AEKQTKEMPS…EEDEDEDEHG (62 aa). Residues 148-165 show a composition bias toward polar residues; the sequence is EMPSSANQNGNRSKSNSK. The segment covering 167–181 has biased composition (basic and acidic residues); that stretch reads RGLESKSSKTIHAKD. Over residues 182–202 the composition is skewed to acidic residues; that stretch reads EEEGLELEEGEEEEDEDEDEH. A PHD-type zinc finger spans residues 204 to 256; sequence ETLCGACGDNYASDEFWICCDMCEKWFHGECVKITPARAEHIKHYKCPTCSNK.

Belongs to the Alfin family. Interacts with H3K4me3 and to a lesser extent with H3K4me2. As to expression, ubiquitously expressed.

The protein localises to the nucleus. Functionally, histone-binding component that specifically recognizes H3 tails trimethylated on 'Lys-4' (H3K4me3), which mark transcription start sites of virtually all active genes. The sequence is that of PHD finger protein ALFIN-LIKE 5 (AL5) from Arabidopsis thaliana (Mouse-ear cress).